The following is a 265-amino-acid chain: 4-hydroxy-tetrahydrodipicolinate reductase (265 aa).

Residues 7 to 12 and Asp33 each bind NAD(+); that span reads GASGRM. Position 34 (Arg34) interacts with NADP(+). Residues 96-98 and 120-123 contribute to the NAD(+) site; these read GTT and AANM. Residue His153 is the Proton donor/acceptor of the active site. (S)-2,3,4,5-tetrahydrodipicolinate is bound at residue His154. Lys157 functions as the Proton donor in the catalytic mechanism. Position 163–164 (163–164) interacts with (S)-2,3,4,5-tetrahydrodipicolinate; it reads GT.

Belongs to the DapB family.

Its subcellular location is the cytoplasm. It catalyses the reaction (S)-2,3,4,5-tetrahydrodipicolinate + NAD(+) + H2O = (2S,4S)-4-hydroxy-2,3,4,5-tetrahydrodipicolinate + NADH + H(+). The enzyme catalyses (S)-2,3,4,5-tetrahydrodipicolinate + NADP(+) + H2O = (2S,4S)-4-hydroxy-2,3,4,5-tetrahydrodipicolinate + NADPH + H(+). It participates in amino-acid biosynthesis; L-lysine biosynthesis via DAP pathway; (S)-tetrahydrodipicolinate from L-aspartate: step 4/4. Catalyzes the conversion of 4-hydroxy-tetrahydrodipicolinate (HTPA) to tetrahydrodipicolinate. The protein is 4-hydroxy-tetrahydrodipicolinate reductase of Burkholderia lata (strain ATCC 17760 / DSM 23089 / LMG 22485 / NCIMB 9086 / R18194 / 383).